A 236-amino-acid chain; its full sequence is Biosynthetic peptidoglycan transglycosylase (236 aa).

A helical membrane pass occupies residues 12 to 31; it reads ALLWFVAGSIVLVLVFRWVP.

This sequence belongs to the glycosyltransferase 51 family.

It localises to the cell inner membrane. The enzyme catalyses [GlcNAc-(1-&gt;4)-Mur2Ac(oyl-L-Ala-gamma-D-Glu-L-Lys-D-Ala-D-Ala)](n)-di-trans,octa-cis-undecaprenyl diphosphate + beta-D-GlcNAc-(1-&gt;4)-Mur2Ac(oyl-L-Ala-gamma-D-Glu-L-Lys-D-Ala-D-Ala)-di-trans,octa-cis-undecaprenyl diphosphate = [GlcNAc-(1-&gt;4)-Mur2Ac(oyl-L-Ala-gamma-D-Glu-L-Lys-D-Ala-D-Ala)](n+1)-di-trans,octa-cis-undecaprenyl diphosphate + di-trans,octa-cis-undecaprenyl diphosphate + H(+). The protein operates within cell wall biogenesis; peptidoglycan biosynthesis. Functionally, peptidoglycan polymerase that catalyzes glycan chain elongation from lipid-linked precursors. The polypeptide is Biosynthetic peptidoglycan transglycosylase (Pseudomonas putida (strain ATCC 47054 / DSM 6125 / CFBP 8728 / NCIMB 11950 / KT2440)).